We begin with the raw amino-acid sequence, 209 residues long: Large ribosomal subunit protein uL3 (209 aa).

N5-methylglutamine is present on Gln-150.

This sequence belongs to the universal ribosomal protein uL3 family. Part of the 50S ribosomal subunit. Forms a cluster with proteins L14 and L19. Post-translationally, methylated by PrmB.

Its function is as follows. One of the primary rRNA binding proteins, it binds directly near the 3'-end of the 23S rRNA, where it nucleates assembly of the 50S subunit. The protein is Large ribosomal subunit protein uL3 of Photobacterium profundum (strain SS9).